The primary structure comprises 375 residues: Patatin-1-Kuras 2 (375 aa).

An N-terminal signal peptide occupies residues 1-11 (MILATTSSTFA). The PNPLA domain occupies 20-218 (LSIDGGGIKG…TVADPALLSV (199 aa)). The GXGXXG signature appears at 24–29 (GGGIKG). The short motif at 63–67 (GTSTG) is the GXSXG element. Ser65 serves as the catalytic Nucleophile. The N-linked (GlcNAc...) asparagine glycan is linked to Asn103. Asp204 acts as the Proton acceptor in catalysis. The DGA/G motif lies at 204–206 (DGA). Positions 349-373 (ETYEEALKRFAKLLSDRKKLRANKA) form a coiled coil.

The protein belongs to the patatin family. In terms of tissue distribution, tuber.

The protein resides in the vacuole. Probable lipolytic acyl hydrolase (LAH), an activity which is thought to be involved in the response of tubers to pathogens. The protein is Patatin-1-Kuras 2 (pat1-k2) of Solanum tuberosum (Potato).